The primary structure comprises 178 residues: Interleukin-1 receptor antagonist protein (178 aa).

The N-terminal stretch at 1–26 (MEICRGPYSHLISLLLILLFRSESAG) is a signal peptide. Cys-92 and Cys-142 are joined by a disulfide. N-linked (GlcNAc...) asparagine glycosylation occurs at Asn-110.

It belongs to the IL-1 family.

It is found in the secreted. Functionally, anti-inflammatory antagonist of interleukin-1 family of proinflammatory cytokines such as interleukin-1beta/IL1B and interleukin-1alpha/IL1A. Protects from immune dysregulation and uncontrolled systemic inflammation triggered by IL1 for a range of innate stimulatory agents such as pathogens. This chain is Interleukin-1 receptor antagonist protein (Il1rn), found in Rattus norvegicus (Rat).